A 371-amino-acid polypeptide reads, in one-letter code: Vasopressin V2 receptor (371 aa).

Over 1–38 (MLLVSTVSAVPGLFSPPSSPSNSSQEELLDDRDPLLVR) the chain is Extracellular. N22 carries N-linked (GlcNAc...) asparagine glycosylation. A helical transmembrane segment spans residues 39–63 (AELALLSTIFVAVALSNGLVLGALI). Residues 64-77 (RRGRRGRWAPMHVF) lie on the Cytoplasmic side of the membrane. Residues 78–98 (ISHLCLADLAVALFQVLPQLA) traverse the membrane as a helical segment. Over 99–113 (WDATDRFHGPDALCR) the chain is Extracellular. Residues 114 to 135 (AVKYLQMVGMYASSYMILAMTL) form a helical membrane-spanning segment. Topologically, residues 136-159 (DRHRAICRPMLAYRHGGGARWNRP) are cytoplasmic. Residues 160–180 (VLVAWAFSLLLSLPQLFIFAQ) traverse the membrane as a helical segment. Over 181 to 200 (RDVGNGSGVFDCWARFAEPW) the chain is Extracellular. Residue N185 is glycosylated (N-linked (GlcNAc...) asparagine). Residues 201 to 220 (GLRAYVTWIALMVFVAPALG) traverse the membrane as a helical segment. Residues 221-271 (IAACQVLIFREIHASLVPGPSERAGRRRRGRRTGSPSEGAHVSAAMAKTVR) are Cytoplasmic-facing. The disordered stretch occupies residues 240-260 (PSERAGRRRRGRRTGSPSEGA). Residues 272-293 (MTLVIVIVYVLCWAPFFLVQLW) traverse the membrane as a helical segment. Over 294-308 (AAWDPEAPLERPPFV) the chain is Extracellular. A helical membrane pass occupies residues 309–328 (LLMLLASLNSCTNPWIYASF). Topologically, residues 329-371 (SSSVSSELRSLLCCAQRHTTHSLGPQDESCATASSSLMKDTPS) are cytoplasmic. 2 S-palmitoyl cysteine lipidation sites follow: C341 and C342. The disordered stretch occupies residues 349-371 (HSLGPQDESCATASSSLMKDTPS). Residues 357–371 (SCATASSSLMKDTPS) are compositionally biased toward polar residues.

The protein belongs to the G-protein coupled receptor 1 family. Vasopressin/oxytocin receptor subfamily. Interacts with ARRDC4. Identified in a complex containing at least ARRDC4, V2R and HGS. Interacts with TMEM147. In terms of tissue distribution, kidney.

It localises to the cell membrane. Functionally, receptor for arginine vasopressin. The activity of this receptor is mediated by G proteins which activate adenylate cyclase. Involved in renal water reabsorption. This is Vasopressin V2 receptor (Avpr2) from Rattus norvegicus (Rat).